Here is a 769-residue protein sequence, read N- to C-terminus: Serine/threonine-protein kinase PLK4 (769 aa).

Positions 14-267 (YEVQHLLGKG…LEAVLCHPFM (254 aa)) constitute a Protein kinase domain. ATP is bound by residues 20–28 (LGKGGFATV) and lysine 43. Aspartate 138 serves as the catalytic Proton acceptor. The Cryptic POLO box 1 (CPB1) domain maps to 381–498 (EDRISVPPLN…ARFVGLVKSK (118 aa)). A Cryptic POLO box 2 (CPB2) domain is found at 499–602 (TPKVTYFSTL…GRRPITDVQP (104 aa)). In terms of domain architecture, POLO box spans 660–739 (PIKRINVPDI…IPNIQLKLKT (80 aa)).

The protein belongs to the protein kinase superfamily. Ser/Thr protein kinase family. CDC5/Polo subfamily. In terms of assembly, homodimer. Ubiquitinated by the SCF(Slimb) ubiquitin ligase complex; leading to its degradation by the proteasome during interphase and regulating centriole number and ensuring the block to centriole reduplication.

Its subcellular location is the cytoplasm. It localises to the cytoskeleton. The protein localises to the microtubule organizing center. The protein resides in the centrosome. It is found in the centriole. The enzyme catalyses L-seryl-[protein] + ATP = O-phospho-L-seryl-[protein] + ADP + H(+). It carries out the reaction L-threonyl-[protein] + ATP = O-phospho-L-threonyl-[protein] + ADP + H(+). Its function is as follows. Serine/threonine-protein kinase that plays a central role in centriole duplication. Able to trigger procentriole formation on the surface of the mother centriole cylinder, using mother centriole as a platform, leading to the recruitment of centriole biogenesis proteins such as sas-6. When overexpressed, it is able to induce centrosome amplification through the simultaneous generation of multiple procentrioles adjoining each parental centriole during S phase. Centrosome amplification following overexpression can initiate tumorigenesis, highlighting the importance of centrosome regulation in cancers. The polypeptide is Serine/threonine-protein kinase PLK4 (SAK) (Drosophila sechellia (Fruit fly)).